The following is a 111-amino-acid chain: Wound-induced proteinase inhibitor 1 (111 aa).

The first 23 residues, 1–23, serve as a signal peptide directing secretion; sequence MESKFAHIIVFFLLATSFETLMA. Residues 24–36 constitute a propeptide that is removed on maturation; sequence RKEIDGPEVIELL.

This sequence belongs to the protease inhibitor I13 (potato type I serine protease inhibitor) family.

It is found in the secreted. The chain is Wound-induced proteinase inhibitor 1 (PIIF) from Solanum lycopersicum (Tomato).